A 432-amino-acid polypeptide reads, in one-letter code: 3-phosphoshikimate 1-carboxyvinyltransferase (432 aa).

The 3-phosphoshikimate site is built by K23, S24, and R28. Residue K23 participates in phosphoenolpyruvate binding. G95 and R123 together coordinate phosphoenolpyruvate. 3-phosphoshikimate is bound by residues S167, Q169, D316, and K343. Position 169 (Q169) interacts with phosphoenolpyruvate. D316 acts as the Proton acceptor in catalysis. R347 and R391 together coordinate phosphoenolpyruvate.

This sequence belongs to the EPSP synthase family. Monomer.

The protein localises to the cytoplasm. It carries out the reaction 3-phosphoshikimate + phosphoenolpyruvate = 5-O-(1-carboxyvinyl)-3-phosphoshikimate + phosphate. Its pathway is metabolic intermediate biosynthesis; chorismate biosynthesis; chorismate from D-erythrose 4-phosphate and phosphoenolpyruvate: step 6/7. Functionally, catalyzes the transfer of the enolpyruvyl moiety of phosphoenolpyruvate (PEP) to the 5-hydroxyl of shikimate-3-phosphate (S3P) to produce enolpyruvyl shikimate-3-phosphate and inorganic phosphate. This chain is 3-phosphoshikimate 1-carboxyvinyltransferase, found in Limosilactobacillus fermentum (strain NBRC 3956 / LMG 18251) (Lactobacillus fermentum).